Here is a 491-residue protein sequence, read N- to C-terminus: Cysteine--tRNA ligase (491 aa).

Cys-31 provides a ligand contact to Zn(2+). Positions 33–43 (PTVYGDAHLGH) match the 'HIGH' region motif. Residues Cys-226, His-251, and Glu-255 each contribute to the Zn(2+) site. Positions 283 to 287 (KMGKS) match the 'KMSKS' region motif. Lys-286 serves as a coordination point for ATP.

It belongs to the class-I aminoacyl-tRNA synthetase family. Monomer. Requires Zn(2+) as cofactor.

It localises to the cytoplasm. It catalyses the reaction tRNA(Cys) + L-cysteine + ATP = L-cysteinyl-tRNA(Cys) + AMP + diphosphate. The protein is Cysteine--tRNA ligase of Parabacteroides distasonis (strain ATCC 8503 / DSM 20701 / CIP 104284 / JCM 5825 / NCTC 11152).